The sequence spans 133 residues: Small ribosomal subunit protein uS8c (133 aa).

This sequence belongs to the universal ribosomal protein uS8 family. In terms of assembly, part of the 30S ribosomal subunit.

It localises to the plastid. The protein localises to the chloroplast. Functionally, one of the primary rRNA binding proteins, it binds directly to 16S rRNA central domain where it helps coordinate assembly of the platform of the 30S subunit. The polypeptide is Small ribosomal subunit protein uS8c (rps8) (Mesostigma viride (Green alga)).